Here is a 101-residue protein sequence, read N- to C-terminus: Large ribosomal subunit protein uL23 (101 aa).

The protein belongs to the universal ribosomal protein uL23 family. As to quaternary structure, part of the 50S ribosomal subunit. Contacts protein L29, and trigger factor when it is bound to the ribosome.

Functionally, one of the early assembly proteins it binds 23S rRNA. One of the proteins that surrounds the polypeptide exit tunnel on the outside of the ribosome. Forms the main docking site for trigger factor binding to the ribosome. The polypeptide is Large ribosomal subunit protein uL23 (Corynebacterium glutamicum (strain R)).